A 1064-amino-acid polypeptide reads, in one-letter code: Lysine-specific demethylase 4A (1064 aa).

Residue alanine 2 is modified to N-acetylalanine. The region spanning isoleucine 14 to arginine 56 is the JmjN domain. Residue tyrosine 132 participates in 2-oxoglutarate binding. The region spanning glutamate 142 to cysteine 308 is the JmjC domain. 2 residues coordinate Fe cation: histidine 188 and glutamate 190. Positions 198 and 206 each coordinate 2-oxoglutarate. Zn(2+) contacts are provided by cysteine 234 and histidine 240. Position 241 (lysine 241) interacts with 2-oxoglutarate. Histidine 276 contacts Fe cation. Zn(2+) is bound by residues cysteine 306 and cysteine 308. Disordered stretches follow at residues glutamate 358 to aspartate 384, phenylalanine 501 to glycine 537, and serine 616 to glutamine 642. Residues glutamate 366–glutamate 382 are compositionally biased toward acidic residues. Low complexity predominate over residues serine 509–serine 532. Serine 523 carries the phosphoserine modification. The interaction with NCOR1 stretch occupies residues arginine 597–lysine 638. The segment covering serine 616–glutamate 634 has biased composition (acidic residues). The segment at methionine 709–serine 767 adopts a PHD-type 1 zinc-finger fold. The C2HC pre-PHD-type zinc finger occupies glutamate 772–alanine 805. The segment at leucine 828 to lysine 885 adopts a PHD-type 2 zinc-finger fold. Tudor domains are found at residues glutamine 897–phenylalanine 954 and glycine 955–proline 1011.

Belongs to the JHDM3 histone demethylase family. In terms of assembly, interacts with histone deacetylase proteins HDAC1, HDAC2 and HDAC3. Interacts with RB and NCOR1. Interacts with VRK1. The cofactor is Fe(2+). Post-translationally, ubiquitinated by RNF8 and RNF168, leading to its degradation. Degradation promotes accessibility of H4K20me2 mark for DNA repair protein TP53BP1, which is then recruited. Also ubiquitinated by the SCF(FBXO22) complex; leading to proteasomal degradation.

Its subcellular location is the nucleus. The enzyme catalyses N(6),N(6),N(6)-trimethyl-L-lysyl(9)-[histone H3] + 2 2-oxoglutarate + 2 O2 = N(6)-methyl-L-lysyl(9)-[histone H3] + 2 formaldehyde + 2 succinate + 2 CO2. The catalysed reaction is N(6),N(6),N(6)-trimethyl-L-lysyl(36)-[histone H3] + 2 2-oxoglutarate + 2 O2 = N(6)-methyl-L-lysyl(36)-[histone H3] + 2 formaldehyde + 2 succinate + 2 CO2. Histone demethylase that specifically demethylates 'Lys-9' and 'Lys-36' residues of histone H3, thereby playing a central role in histone code. Does not demethylate histone H3 'Lys-4', H3 'Lys-27' nor H4 'Lys-20'. Demethylates trimethylated H3 'Lys-9' and H3 'Lys-36' residue, while it has no activity on mono- and dimethylated residues. Demethylation of Lys residue generates formaldehyde and succinate. Participates in transcriptional repression of ASCL2 and E2F-responsive promoters via the recruitment of histone deacetylases and NCOR1, respectively. The sequence is that of Lysine-specific demethylase 4A (KDM4A) from Pongo abelii (Sumatran orangutan).